Here is a 60-residue protein sequence, read N- to C-terminus: Phycobilisome degradation protein NblA homolog 2 (60 aa).

To Synechococcus PCC 7942 NblA and some, to chloroplast ycf18.

The sequence is that of Phycobilisome degradation protein NblA homolog 2 from Synechocystis sp. (strain ATCC 27184 / PCC 6803 / Kazusa).